The chain runs to 248 residues: Ribonuclease 3 (248 aa).

Positions 6 to 136 (LAYLQTLIGS…LIGAIYLDKG (131 aa)) constitute an RNase III domain. Glutamate 49 is a Mg(2+) binding site. Aspartate 53 is a catalytic residue. Residues aspartate 122 and glutamate 125 each coordinate Mg(2+). Glutamate 125 is a catalytic residue. One can recognise a DRBM domain in the interval 163–231 (NYKSCLIEYS…AKEAMERIIA (69 aa)).

It belongs to the ribonuclease III family. As to quaternary structure, homodimer. Mg(2+) serves as cofactor.

The protein localises to the cytoplasm. The catalysed reaction is Endonucleolytic cleavage to 5'-phosphomonoester.. Its function is as follows. Digests double-stranded RNA. Involved in the processing of primary rRNA transcript to yield the immediate precursors to the large and small rRNAs (23S and 16S). Processes some mRNAs, and tRNAs when they are encoded in the rRNA operon. Processes pre-crRNA and tracrRNA of type II CRISPR loci if present in the organism. The polypeptide is Ribonuclease 3 (Chlorobium chlorochromatii (strain CaD3)).